A 138-amino-acid chain; its full sequence is Cysteine desulfuration protein SufE (138 aa).

The Cysteine persulfide intermediate role is filled by cysteine 51.

It belongs to the SufE family. Homodimer. Interacts with SufS.

It is found in the cytoplasm. It functions in the pathway cofactor biosynthesis; iron-sulfur cluster biosynthesis. Functionally, participates in cysteine desulfuration mediated by SufS. Cysteine desulfuration mobilizes sulfur from L-cysteine to yield L-alanine and constitutes an essential step in sulfur metabolism for biosynthesis of a variety of sulfur-containing biomolecules. Functions as a sulfur acceptor for SufS, by mediating the direct transfer of the sulfur atom from the S-sulfanylcysteine of SufS, an intermediate product of cysteine desulfuration process. This Citrobacter koseri (strain ATCC BAA-895 / CDC 4225-83 / SGSC4696) protein is Cysteine desulfuration protein SufE.